The sequence spans 353 residues: MEGIRIFTSDNYTEDDLGSGDYDSMKEPCFREENAHFNRIFLPTVYSIIFLTGIVGNGLVILVMGYQKKLRSMTDKYRLHLSVADLLFVLTLPFWAVDAVANWYFGKFLCKAVHVIYTVNLYSSVLILAFISLDRYLAIVHATNSQKPRKLLAEKVVYVGVWLPAVLLTIPDLIFADIKEVDERYICDRFYPSDLWLVVFQFQHIVVGLLLPGIVILSCYCIIISKLSHSKGYQKRKALKTTVILILTFFACWLPYYIGISIDSFILLEIIQQGCEFESTVHKWISITEALAFFHCCLNPILYAFLGAKFKTSAQHALTSVSRGSSLKILSKGKRGGHSSVSTESESSSFHSS.

The important for chemokine binding and signaling stretch occupies residues 1-22 (MEGIRIFTSDNYTEDDLGSGDY). Topologically, residues 1–39 (MEGIRIFTSDNYTEDDLGSGDYDSMKEPCFREENAHFNR) are extracellular. Asparagine 11 carries N-linked (GlcNAc...) asparagine glycosylation. Position 12 is a sulfotyrosine (tyrosine 12). The O-linked (Xyl...) (chondroitin sulfate) serine glycan is linked to serine 19. The residue at position 22 (tyrosine 22) is a Sulfotyrosine. Intrachain disulfides connect cysteine 29–cysteine 275 and cysteine 110–cysteine 187. The helical transmembrane segment at 40 to 64 (IFLPTVYSIIFLTGIVGNGLVILVM) threads the bilayer. At 65-78 (GYQKKLRSMTDKYR) the chain is on the cytoplasmic side. The helical transmembrane segment at 79 to 100 (LHLSVADLLFVLTLPFWAVDAV) threads the bilayer. The segment at 95-98 (WAVD) is chemokine binding. The Extracellular segment spans residues 101–111 (ANWYFGKFLCK). A helical membrane pass occupies residues 112-131 (AVHVIYTVNLYSSVLILAFI). Positions 114-118 (HVIYT) are chemokine binding. The Cytoplasmic segment spans residues 132–155 (SLDRYLAIVHATNSQKPRKLLAEK). The Important for signaling signature appears at 134-136 (DRY). An involved in dimerization; when bound to chemokine region spans residues 136–148 (YLAIVHATNSQKP). Residues 156-175 (VVYVGVWLPAVLLTIPDLIF) form a helical membrane-spanning segment. At 176–196 (ADIKEVDERYICDRFYPSDLW) the chain is on the extracellular side. The interval 187–191 (CDRFY) is chemokine binding, important for signaling. The tract at residues 192–211 (PSDLWLVVFQFQHIVVGLLL) is involved in dimerization. Residues 197–217 (LVVFQFQHIVVGLLLPGIVIL) form a helical membrane-spanning segment. Topologically, residues 218–242 (SCYCIIISKLSHSKGYQKRKALKTT) are cytoplasmic. Residues 243–262 (VILILTFFACWLPYYIGISI) traverse the membrane as a helical segment. The Extracellular portion of the chain corresponds to 263–283 (DSFILLEIIQQGCEFESTVHK). The segment at 267-269 (LLE) is involved in dimerization. The helical transmembrane segment at 284 to 303 (WISITEALAFFHCCLNPILY) threads the bilayer. Residues 304-353 (AFLGAKFKTSAQHALTSVSRGSSLKILSKGKRGGHSSVSTESESSSFHSS) are Cytoplasmic-facing. Residues serine 320 and serine 322 each carry the phosphoserine modification. Phosphoserine; by PKC and GRK6 is present on residues serine 325 and serine 326. The disordered stretch occupies residues 330–353 (LSKGKRGGHSSVSTESESSSFHSS). Residue serine 331 is modified to Phosphoserine; by GRK6. A Glycyl lysine isopeptide (Lys-Gly) (interchain with G-Cter in ubiquitin) cross-link involves residue lysine 332. Residues 338 to 353 (HSSVSTESESSSFHSS) are compositionally biased toward low complexity. Residue serine 340 is modified to Phosphoserine; by GRK6. 2 positions are modified to phosphoserine: serine 349 and serine 352.

The protein belongs to the G-protein coupled receptor 1 family. As to quaternary structure, monomer. Can form homodimers. Interacts with CD164. Interacts with ARRB2; the interaction is dependent on the C-terminal phosphorylation of CXCR4 and allows activation of MAPK1 and MAPK3. Interacts with ARR3; the interaction is dependent on the C-terminal phosphorylation of CXCR4 and modulates calcium mobilization. Interacts with RNF113A; the interaction, enhanced by CXCL12, promotes CXCR4 ubiquitination and subsequent degradation. Interacts (via the cytoplasmic C-terminal) with ITCH (via the WW domains I and II); the interaction, enhanced by CXCL12, promotes CXCR4 ubiquitination and leads to its degradation. Interacts with extracellular ubiquitin. Interacts with DBN1; this interaction is enhanced by antigenic stimulation. Following LPS binding, may form a complex with GDF5, HSP90AA1 and HSPA8. Post-translationally, phosphorylated on agonist stimulation. Rapidly phosphorylated on serine and threonine residues in the C-terminal. Phosphorylation at Ser-325 and Ser-326 leads to recruitment of ITCH, ubiquitination and protein degradation. In terms of processing, ubiquitinated after ligand binding, leading to its degradation. Ubiquitinated by ITCH at the cell membrane on agonist stimulation. The ubiquitin-dependent mechanism, endosomal sorting complex required for transport (ESCRT), then targets CXCR4 for lysosomal degradation. This process is dependent also on prior Ser-/Thr-phosphorylation in the C-terminal of CXCR4. Also binding of ARRB1 to STAM negatively regulates CXCR4 sorting to lysosomes though modulating ubiquitination of SFR5S. Sulfation is required for efficient binding of CXCL12/SDF-1alpha and promotes its dimerization. Post-translationally, O- and N-glycosylated. N-glycosylation can mask coreceptor function. The O-glycosylation chondroitin sulfate attachment does not affect interaction with CXCL12/SDF-1alpha nor its coreceptor activity. Brain, heart, kidney, lung and liver.

The protein resides in the cell membrane. Its subcellular location is the cell junction. The protein localises to the early endosome. It localises to the late endosome. It is found in the lysosome. Its function is as follows. Receptor for the C-X-C chemokine CXCL12/SDF-1 that transduces a signal by increasing intracellular calcium ion levels and enhancing MAPK1/MAPK3 activation. Involved in the AKT signaling cascade. Plays a role in regulation of cell migration, e.g. during wound healing. Acts as a receptor for extracellular ubiquitin; leading to enhanced intracellular calcium ions and reduced cellular cAMP levels. Binds bacterial lipopolysaccharide (LPS) et mediates LPS-induced inflammatory response, including TNF secretion by monocytes. Involved in hematopoiesis and in cardiac ventricular septum formation. Also plays an essential role in vascularization of the gastrointestinal tract, probably by regulating vascular branching and/or remodeling processes in endothelial cells. Involved in cerebellar development. In the CNS, could mediate hippocampal-neuron survival. The protein is C-X-C chemokine receptor type 4 (CXCR4) of Bos taurus (Bovine).